Consider the following 878-residue polypeptide: Bifunctional heparan sulfate N-deacetylase/N-sulfotransferase 1 (878 aa).

Over 1 to 17 (MSLSLKTRRFGRPVRPQ) the chain is Cytoplasmic. A sufficient for localization to Golgi membrane region spans residues 1–169 (MSLSLKTRRF…VEYGVGIIGF (169 aa)). Residues 18–38 (LVLLLLFALCLLSVFISAYYL) traverse the membrane as a helical; Signal-anchor for type II membrane protein segment. The Lumenal segment spans residues 39-878 (YGWKRGLEPS…WLREELQNTR (840 aa)). Residues 40 to 594 (GWKRGLEPSG…KRHKDIWSKE (555 aa)) form a heparan sulfate N-deacetylase 1 region. N-linked (GlcNAc...) asparagine glycans are attached at residues Asn231, Asn347, and Asn397. Residues 595 to 878 (KTCDRFPKLL…WLREELQNTR (284 aa)) are heparan sulfate N-sulfotransferase 1. Lys610 serves as the catalytic For sulfotransferase activity. 610–614 (KTGTT) lines the adenosine 3',5'-bisphosphate pocket. A glycan (N-linked (GlcNAc...) asparagine) is linked at Asn663. Ser708 and Trp813 together coordinate adenosine 3',5'-bisphosphate. The cysteines at positions 814 and 824 are disulfide-linked. An adenosine 3',5'-bisphosphate-binding site is contributed by 829–833 (KGRKY).

It belongs to the sulfotransferase 1 family. NDST subfamily. As to quaternary structure, monomer.

The protein localises to the golgi apparatus membrane. It is found in the golgi apparatus. It localises to the trans-Golgi network membrane. It catalyses the reaction alpha-D-glucosaminyl-[heparan sulfate](n) + 3'-phosphoadenylyl sulfate = N-sulfo-alpha-D-glucosaminyl-[heparan sulfate](n) + adenosine 3',5'-bisphosphate + 2 H(+). The protein operates within glycan metabolism; heparan sulfate biosynthesis. It functions in the pathway glycan metabolism; heparin biosynthesis. Functionally, essential bifunctional enzyme that catalyzes both the N-deacetylation and the N-sulfation of glucosamine (GlcNAc) of the glycosaminoglycan in heparan sulfate. Modifies the GlcNAc-GlcA disaccharide repeating sugar backbone to make N-sulfated heparosan, a prerequisite substrate for later modifications in heparin biosynthesis. Plays a role in determining the extent and pattern of sulfation of heparan sulfate. The protein is Bifunctional heparan sulfate N-deacetylase/N-sulfotransferase 1 (ndst1) of Xenopus laevis (African clawed frog).